Here is a 385-residue protein sequence, read N- to C-terminus: Heterogeneous nuclear ribonucleoprotein 87F (385 aa).

2 RRM domains span residues 24–101 (RKLF…RAVP) and 115–192 (KKLF…KAIA). 2 disordered regions span residues 192–289 (AKQD…WNGG) and 305–385 (GNGG…NRRY). Gly residues-rich tracts occupy residues 199 to 289 (QGGG…WNGG) and 305 to 317 (GNGG…GGFG). A compositionally biased stretch (polar residues) spans 319-336 (EYQQSYGGGPQRNSNFGN). Composition is skewed to gly residues over residues 344–362 (QGGG…GQGF) and 369–385 (TGGG…NRRY).

It is found in the nucleus. The protein resides in the cytoplasm. Its function is as follows. This protein is a component of ribonucleosomes. Could be needed to organize a concentration gradient of a dorsalizing morphogen (Dm) originating in the germinal vesicle. The protein is Heterogeneous nuclear ribonucleoprotein 87F (Hrb87F) of Drosophila melanogaster (Fruit fly).